Reading from the N-terminus, the 445-residue chain is mRNA cleavage and polyadenylation factor CLP1 (445 aa).

ATP contacts are provided by residues Glu33 and 131–136; that span reads SSGKTS.

Belongs to the Clp1 family. Clp1 subfamily. As to quaternary structure, component of a pre-mRNA cleavage factor complex. Interacts directly with PCF11.

The protein resides in the nucleus. Required for endonucleolytic cleavage during polyadenylation-dependent pre-mRNA 3'-end formation. In Eremothecium gossypii (strain ATCC 10895 / CBS 109.51 / FGSC 9923 / NRRL Y-1056) (Yeast), this protein is mRNA cleavage and polyadenylation factor CLP1.